A 109-amino-acid chain; its full sequence is Cytochrome c (109 aa).

Heme c is bound by residues Cys25, Cys28, His29, and Met88.

Belongs to the cytochrome c family. In terms of processing, binds 1 heme c group covalently per subunit.

The protein localises to the mitochondrion intermembrane space. Functionally, electron carrier protein. The oxidized form of the cytochrome c heme group can accept an electron from the heme group of the cytochrome c1 subunit of cytochrome reductase. Cytochrome c then transfers this electron to the cytochrome oxidase complex, the final protein carrier in the mitochondrial electron-transport chain. This is Cytochrome c from Tetrahymena pyriformis.